The following is a 278-amino-acid chain: Large ribosomal subunit protein uL2 (278 aa).

Disordered stretches follow at residues 1–59 and 222–278; these read MAIR…GGHK and RGAA…NKKR. Over residues 16-27 the composition is skewed to polar residues; sequence SSVSEFSEITRS. Composition is skewed to basic residues over residues 45-59 and 269-278; these read VHGHITTRHKGGGHK and VRRRRPNKKR.

Belongs to the universal ribosomal protein uL2 family. In terms of assembly, part of the 50S ribosomal subunit. Forms a bridge to the 30S subunit in the 70S ribosome.

Its function is as follows. One of the primary rRNA binding proteins. Required for association of the 30S and 50S subunits to form the 70S ribosome, for tRNA binding and peptide bond formation. It has been suggested to have peptidyltransferase activity; this is somewhat controversial. Makes several contacts with the 16S rRNA in the 70S ribosome. The polypeptide is Large ribosomal subunit protein uL2 (Corynebacterium urealyticum (strain ATCC 43042 / DSM 7109)).